A 427-amino-acid polypeptide reads, in one-letter code: ATP-sensitive inward rectifier potassium channel 12 (427 aa).

Residues 1–77 (MTAASRANPY…LADMFTTCVD (77 aa)) are Cytoplasmic-facing. Cys75 carries the post-translational modification S-nitrosocysteine. The chain crosses the membrane as a helical span at residues 78–104 (IRWRYMLLIFSLAFLASWLLFGIIFWV). A 1,2-diacyl-sn-glycero-3-phospho-(1D-myo-inositol-4,5-bisphosphate) is bound by residues Arg79 and Arg81. At 105-129 (IAVAHGDLEPAEGRGRTPCVLQVHG) the chain is on the extracellular side. Cys123 and Cys155 are joined by a disulfide. Residues 130–146 (FMAAFLFSIETQTTIGY) constitute an intramembrane region (helical; Pore-forming). K(+) contacts are provided by Thr143, Ile144, Gly145, and Tyr146. Positions 143–148 (TIGYGL) match the Selectivity filter motif. The Extracellular segment spans residues 147-155 (GLRCVTEEC). A helical transmembrane segment spans residues 156–183 (PVAVFMVVAQSIVGCIIDSFMIGAIMAK). Lys183 and Lys188 together coordinate a 1,2-diacyl-sn-glycero-3-phospho-(1D-myo-inositol-4,5-bisphosphate). Over 184–427 (MARPKKRAQT…ERPYRRESEI (244 aa)) the chain is Cytoplasmic. Residues 387–427 (DEEDEVATDRDGRSPQPEHDFDRLQASSAALERPYRRESEI) form a disordered region. The span at 393 to 409 (ATDRDGRSPQPEHDFDR) shows a compositional bias: basic and acidic residues. The PDZ-binding motif lies at 425–427 (SEI).

The protein belongs to the inward rectifier-type potassium channel (TC 1.A.2.1) family. KCNJ12 subfamily. In terms of assembly, homotetramer. Forms heteromer with KCNJ4. Can form heteromeric channels with Kir2.6/KCNJ18. Association, via its PDZ-recognition domain, with LIN7A, LIN7B, LIN7C, DLG1, CASK and APBA1 plays a key role in its localization and trafficking. As to expression, highest level in cerebellum.

Its subcellular location is the membrane. It localises to the cell membrane. It is found in the sarcolemma. The protein localises to the T-tubule. The catalysed reaction is K(+)(in) = K(+)(out). With respect to regulation, activated by phosphatidylinositol 4,5-biphosphate (PtdIns(4,5)P2). PtdIns(4,5)P2 binding to the cytoplasmic side of the channel triggers a conformation change leading to channel opening. Inhibited by Ba(2+). Functionally, inward rectifying potassium channel that probably participates in controlling the resting membrane potential in electrically excitable cells. It probably participates in establishing action potential waveform and excitability of neuronal and muscle tissues. Inward rectifier potassium channels are characterized by a greater tendency to allow potassium to flow into the cell rather than out of it. Their voltage dependence is regulated by the concentration of extracellular potassium; as external potassium is raised, the voltage range of the channel opening shifts to more positive voltages. The inward rectification is mainly due to the blockage of outward current by internal magnesium. This is ATP-sensitive inward rectifier potassium channel 12 (Kcnj12) from Mus musculus (Mouse).